The sequence spans 276 residues: Urease accessory protein UreD (276 aa).

Belongs to the UreD family. In terms of assembly, ureD, UreF and UreG form a complex that acts as a GTP-hydrolysis-dependent molecular chaperone, activating the urease apoprotein by helping to assemble the nickel containing metallocenter of UreC. The UreE protein probably delivers the nickel.

It localises to the cytoplasm. Required for maturation of urease via the functional incorporation of the urease nickel metallocenter. The chain is Urease accessory protein UreD from Albidiferax ferrireducens (strain ATCC BAA-621 / DSM 15236 / T118) (Rhodoferax ferrireducens).